The sequence spans 257 residues: Imidazole glycerol phosphate synthase subunit HisF (257 aa).

Catalysis depends on residues Asp11 and Asp130.

It belongs to the HisA/HisF family. In terms of assembly, heterodimer of HisH and HisF.

Its subcellular location is the cytoplasm. The enzyme catalyses 5-[(5-phospho-1-deoxy-D-ribulos-1-ylimino)methylamino]-1-(5-phospho-beta-D-ribosyl)imidazole-4-carboxamide + L-glutamine = D-erythro-1-(imidazol-4-yl)glycerol 3-phosphate + 5-amino-1-(5-phospho-beta-D-ribosyl)imidazole-4-carboxamide + L-glutamate + H(+). It functions in the pathway amino-acid biosynthesis; L-histidine biosynthesis; L-histidine from 5-phospho-alpha-D-ribose 1-diphosphate: step 5/9. IGPS catalyzes the conversion of PRFAR and glutamine to IGP, AICAR and glutamate. The HisF subunit catalyzes the cyclization activity that produces IGP and AICAR from PRFAR using the ammonia provided by the HisH subunit. In Aliivibrio fischeri (strain MJ11) (Vibrio fischeri), this protein is Imidazole glycerol phosphate synthase subunit HisF.